The primary structure comprises 261 residues: Glutamate racemase (261 aa).

Residues aspartate 7–serine 8 and tyrosine 39–glycine 40 contribute to the substrate site. The active-site Proton donor/acceptor is cysteine 71. Asparagine 72–threonine 73 is a substrate binding site. Residue cysteine 184 is the Proton donor/acceptor of the active site. Threonine 185–histidine 186 serves as a coordination point for substrate.

This sequence belongs to the aspartate/glutamate racemases family.

The catalysed reaction is L-glutamate = D-glutamate. It participates in cell wall biogenesis; peptidoglycan biosynthesis. Provides the (R)-glutamate required for cell wall biosynthesis. The polypeptide is Glutamate racemase (Aliarcobacter butzleri (strain RM4018) (Arcobacter butzleri)).